The following is a 661-amino-acid chain: MNNFSIISEYKPAGDQPKAIDEIIAGLNSKKRSQMLLGITGSGKTFTMANIIERTNRPTLIMAHNKTLAAQIYSEMKSIFPKNAVEYFVSYYDYYQPEAYIARTDTFIEKDSSINEQIDLMRHSATRSLLERRDVIVVSSVSCIYGLGSPDLYYQMTVNLEPGKSYPRDKLLNDLINLQYERNDIGFERGCFRVKGDNIDIFPSHYSDKAWRLSFFGNELEYIHEFDPLTGEKLAKLDKAMVFGNSHFVMPQETVNSAISGIEEELQKRLEFLKSQDKPLETQRLNQRTQYDLEMLTETGSCKGVENYSRFFTGRNAGEPPPTLFEYLPEDALLFVDESHVSVPQIRAMYNGDRARKEVLVEHGFRLPSALDNRPLKFEEWEKFRPQTVFVSATPGPFELEETGDTVVELIIRPTGLLDPECIIKPATNQVEDLIGEIQATIAKGFRVLVTTLTKKMAEDLTAYLQELKYKTSYLHSNIHTLERIEILRDLRQGTIDILVGINLLREGLDIPECGLVAILDADKEGFLRSEVSLIQTIGRAARNSEGRVILYADKMTKSIDKAMSETSRRRQIQQEYNEKHGIIPKTINRAIHALAELEKVDSKLDKKQAHTLFDNPAKLKAHIEKLKKDMLKAASNLEFEQAAKLRDQLKTLEEAALELS.

Positions 25–414 (AGLNSKKRSQ…DTVVELIIRP (390 aa)) constitute a Helicase ATP-binding domain. Residue 38–45 (GITGSGKT) participates in ATP binding. A Beta-hairpin motif is present at residues 91–114 (YYDYYQPEAYIARTDTFIEKDSSI). A Helicase C-terminal domain is found at 430 to 592 (QVEDLIGEIQ…IIPKTINRAI (163 aa)). The UVR domain maps to 621–656 (KAHIEKLKKDMLKAASNLEFEQAAKLRDQLKTLEEA).

It belongs to the UvrB family. As to quaternary structure, forms a heterotetramer with UvrA during the search for lesions. Interacts with UvrC in an incision complex.

The protein resides in the cytoplasm. Its function is as follows. The UvrABC repair system catalyzes the recognition and processing of DNA lesions. A damage recognition complex composed of 2 UvrA and 2 UvrB subunits scans DNA for abnormalities. Upon binding of the UvrA(2)B(2) complex to a putative damaged site, the DNA wraps around one UvrB monomer. DNA wrap is dependent on ATP binding by UvrB and probably causes local melting of the DNA helix, facilitating insertion of UvrB beta-hairpin between the DNA strands. Then UvrB probes one DNA strand for the presence of a lesion. If a lesion is found the UvrA subunits dissociate and the UvrB-DNA preincision complex is formed. This complex is subsequently bound by UvrC and the second UvrB is released. If no lesion is found, the DNA wraps around the other UvrB subunit that will check the other stand for damage. The chain is UvrABC system protein B from Rickettsia felis (strain ATCC VR-1525 / URRWXCal2) (Rickettsia azadi).